Reading from the N-terminus, the 635-residue chain is 5-aminolevulinate synthase, non-specific, mitochondrial (635 aa).

The transit peptide at 1–56 (MEAVVRRCPFLARVSQAFLQKAGPSLLFYAQHCPKMMEAAPPAAARGLATSASRGQ) directs the protein to the mitochondrion. Residues 44-66 (AARGLATSASRGQQVEETPAAQP) show a composition bias toward low complexity. The tract at residues 44–94 (AARGLATSASRGQQVEETPAAQPEAKKAKEVAQQNTDGSQPPAGHPPAAAV) is disordered. The substrate site is built by arginine 212, serine 329, and lysine 348. Residues serine 381, histidine 409, and threonine 437 each contribute to the pyridoxal 5'-phosphate site. Lysine 440 is a catalytic residue. At lysine 440 the chain carries N6-(pyridoxal phosphate)lysine. Residues threonine 469 and threonine 470 each contribute to the pyridoxal 5'-phosphate site. Residue threonine 557 coordinates substrate.

The protein belongs to the class-II pyridoxal-phosphate-dependent aminotransferase family. In terms of assembly, homodimer. Requires pyridoxal 5'-phosphate as cofactor. Ubiquitous.

The protein resides in the mitochondrion inner membrane. It carries out the reaction succinyl-CoA + glycine + H(+) = 5-aminolevulinate + CO2 + CoA. Its pathway is porphyrin-containing compound metabolism; protoporphyrin-IX biosynthesis; 5-aminolevulinate from glycine: step 1/1. Its function is as follows. Catalyzes the pyridoxal 5'-phosphate (PLP)-dependent condensation of succinyl-CoA and glycine to form aminolevulinic acid (ALA), with CoA and CO2 as by-products. This is 5-aminolevulinate synthase, non-specific, mitochondrial (ALAS1) from Gallus gallus (Chicken).